A 142-amino-acid chain; its full sequence is Large ribosomal subunit protein bL17 (142 aa).

The protein belongs to the bacterial ribosomal protein bL17 family. In terms of assembly, part of the 50S ribosomal subunit. Contacts protein L32.

The protein is Large ribosomal subunit protein bL17 of Brucella canis (strain ATCC 23365 / NCTC 10854 / RM-666).